The sequence spans 459 residues: Bifunctional protein GlmU (459 aa).

The segment at 1 to 229 (MTNYAIILAA…FDESLGVNDR (229 aa)) is pyrophosphorylase. Residues 8–11 (LAAG), K22, Q72, and 77–78 (GT) contribute to the UDP-N-acetyl-alpha-D-glucosamine site. D102 is a Mg(2+) binding site. G139, E154, N169, and N227 together coordinate UDP-N-acetyl-alpha-D-glucosamine. N227 lines the Mg(2+) pocket. The linker stretch occupies residues 230-250 (VALATAESVMRRRINQQHMVN). The interval 251 to 459 (GVSFVNPHAT…KRLPHHPQNK (209 aa)) is N-acetyltransferase. UDP-N-acetyl-alpha-D-glucosamine contacts are provided by R332 and K350. H362 serves as the catalytic Proton acceptor. The UDP-N-acetyl-alpha-D-glucosamine site is built by Y365 and N376. Acetyl-CoA is bound by residues A379, 385–386 (NY), S404, A422, and R439.

It in the N-terminal section; belongs to the N-acetylglucosamine-1-phosphate uridyltransferase family. This sequence in the C-terminal section; belongs to the transferase hexapeptide repeat family. In terms of assembly, homotrimer. It depends on Mg(2+) as a cofactor.

It is found in the cytoplasm. It catalyses the reaction alpha-D-glucosamine 1-phosphate + acetyl-CoA = N-acetyl-alpha-D-glucosamine 1-phosphate + CoA + H(+). The enzyme catalyses N-acetyl-alpha-D-glucosamine 1-phosphate + UTP + H(+) = UDP-N-acetyl-alpha-D-glucosamine + diphosphate. It functions in the pathway nucleotide-sugar biosynthesis; UDP-N-acetyl-alpha-D-glucosamine biosynthesis; N-acetyl-alpha-D-glucosamine 1-phosphate from alpha-D-glucosamine 6-phosphate (route II): step 2/2. It participates in nucleotide-sugar biosynthesis; UDP-N-acetyl-alpha-D-glucosamine biosynthesis; UDP-N-acetyl-alpha-D-glucosamine from N-acetyl-alpha-D-glucosamine 1-phosphate: step 1/1. Its pathway is bacterial outer membrane biogenesis; LPS lipid A biosynthesis. Catalyzes the last two sequential reactions in the de novo biosynthetic pathway for UDP-N-acetylglucosamine (UDP-GlcNAc). The C-terminal domain catalyzes the transfer of acetyl group from acetyl coenzyme A to glucosamine-1-phosphate (GlcN-1-P) to produce N-acetylglucosamine-1-phosphate (GlcNAc-1-P), which is converted into UDP-GlcNAc by the transfer of uridine 5-monophosphate (from uridine 5-triphosphate), a reaction catalyzed by the N-terminal domain. The chain is Bifunctional protein GlmU from Streptococcus sanguinis (strain SK36).